The sequence spans 323 residues: Sphingolipid delta(4)-desaturase DES1 (323 aa).

Residue Gly-2 is the site of N-myristoyl glycine attachment. 2 consecutive transmembrane segments (helical) span residues His-41–Val-61 and Trp-68–Ile-88. A Histidine box-1 motif is present at residues His-89–His-93. A helical transmembrane segment spans residues Trp-104–Phe-124. The Histidine box-2 signature appears at His-128 to His-132. Helical transmembrane passes span Phe-152–Phe-172, Tyr-184–Phe-204, and Leu-209–Phe-229. The Histidine box-3 signature appears at His-259–His-263. A Phosphoserine modification is found at Ser-307.

It belongs to the fatty acid desaturase type 1 family. DEGS subfamily. Interacts with RLBP1; the interaction increases synthesis of chromophore-precursors by DEGS1. In terms of processing, myristoylation can target the enzyme to the mitochondria leading to an increase in ceramide levels. Detected in testis. Detected in pachytene spermatocytes and round spermatids. Expressed in retina and retinal pigment epithelium by Mueller cells (at protein level).

It is found in the mitochondrion membrane. Its subcellular location is the endoplasmic reticulum membrane. The catalysed reaction is an N-acylsphinganine + 2 Fe(II)-[cytochrome b5] + O2 + 2 H(+) = an N-acylsphing-4-enine + 2 Fe(III)-[cytochrome b5] + 2 H2O. It catalyses the reaction all-trans-retinol = 11-cis-retinol. The enzyme catalyses all-trans-retinol = 9-cis-retinol. It carries out the reaction all-trans-retinol = 13-cis-retinol. The catalysed reaction is 11-cis-retinol = 13-cis-retinol. It catalyses the reaction 11-cis-retinol = 9-cis-retinol. Has sphingolipid-delta-4-desaturase activity. Converts D-erythro-sphinganine to D-erythro-sphingosine (E-sphing-4-enine). Catalyzes the equilibrium isomerization of retinols. In Mus musculus (Mouse), this protein is Sphingolipid delta(4)-desaturase DES1.